Consider the following 1189-residue polypeptide: MDEILYNDNVMIVNDEETSGDVNNQQLISNETIANIQTRLKQLQVSSDSDLEDYINARKMLIEMLNARKEYIPDVLSSLSVERLKSIDLIVQKLNSCEHSIIEHANILDQLQNEITSLKTENEYIVRLNDINAKKAKLFDDFNAKYEDDVGPLYVYAASEDVRQAAIYLSYMMRMIITFENETIESNFIVSDSLYIGDTILNVTISTDLQLGNRTVNVTMDDISESFVILEREYIELYLTRHVHKILNNTISYSTALVIFKRTVEDISIPSQIVNTVLFQQQISNSVTVKDVSKSLVCDFKIDAETELYILLPTIIPDSYSMDILGNQEFMLYLSDLYAFNLLQEILDVLYIDQLEKGLENEDNRAIEQLTLQNAQSIRYILNTLQYVPLYKPYDILIENGILNSIEYAAPLMYIKNEYISKNITRTSDKYTTDRVIGAHVLSGSNMDSLPNTAFKQKLFMNTQSVLTQENPIYEDTDIIIYAVCVISREYDDTICGSGYTYTTSNMYANRSEFIRMNGCIADSVPVKTSTIVKCTYSLIDANRIGLLYNKTRTNIKINQILICFKNSFAVPTSLNVAMDVKIQCLKKTETLSVTQAKPSQILLENGISYFGIICDISFSSDYVFDGNESINFTLQPNTNISGKKELVMYGRQGGGMQISDMFQHKQDSFEYSIKVGLVCNSTQIGMGQWFEIFSTLIQGEFIGNIDTLRESTIRGISNIYDFTDVREFLHEYKISIVKLSIQCLRAMSAGVQDVIVAYSHALSNIDALILDITVEMNDFSNRLTTLEDKVKDIEKWIQNQIDSQNTTIWGSLLDTFVNLIIATALGYATAGIGVLVTKISVAVLSFTSRALTSIARGLQAAGHKVSTLFKLHITQPFLNGAHSLKLLTQKFNAVQGNLTKYERKYITALELSEANNYAAIAKYLKNLNPEIKLAEAINHKLVYSSRYVNPVFKLGNEVMSTVEINYHGLTAIGKLPQLRTPTKKLLSSDFGTTLMKKNKAPAHAYMVITDVDARSEYDLVTKYILGVSEGFTSTTKHVTAGSFKLQYEFRKHPTTNKTTVSFSTYQDTGYTAEEVKLLFNRYFKNRTNITNANQQWELLSSKFMSLQTSTLNSQRFVLPTSHRTTALYEAFKNTRRFDYNLLTNNCQNFCQDSLNWLENGVINGSLIQHSDQLAIKYVNALRGDLSLI.

Residues 981 to 1187 (TPTKKLLSSD…YVNALRGDLS (207 aa)) enclose the PPPDE domain. Residues histidine 1004 and cysteine 1147 contribute to the active site.

It is found in the virion. The polypeptide is Putative structural protein VP1 (S1) (Aedes pseudoscutellaris reovirus (isolate France) (ApRV)).